The chain runs to 375 residues: Aminomethyltransferase (375 aa).

It belongs to the GcvT family. The glycine cleavage system is composed of four proteins: P, T, L and H.

The enzyme catalyses N(6)-[(R)-S(8)-aminomethyldihydrolipoyl]-L-lysyl-[protein] + (6S)-5,6,7,8-tetrahydrofolate = N(6)-[(R)-dihydrolipoyl]-L-lysyl-[protein] + (6R)-5,10-methylene-5,6,7,8-tetrahydrofolate + NH4(+). Its function is as follows. The glycine cleavage system catalyzes the degradation of glycine. In Ralstonia nicotianae (strain ATCC BAA-1114 / GMI1000) (Ralstonia solanacearum), this protein is Aminomethyltransferase.